Consider the following 486-residue polypeptide: 6-phosphogluconate dehydrogenase, decarboxylating 2 (486 aa).

Residues 12–17 (GLAVMG), 35–37 (NRT), 79–81 (VKA), and asparagine 107 contribute to the NADP(+) site. Substrate is bound by residues asparagine 107 and 133-135 (SGG). Lysine 188 (proton acceptor) is an active-site residue. 191-192 (HN) contacts substrate. Catalysis depends on glutamate 195, which acts as the Proton donor. Residues tyrosine 196, lysine 266, arginine 293, arginine 456, and histidine 462 each coordinate substrate. Positions 484-486 (SKI) match the Microbody targeting signal motif.

This sequence belongs to the 6-phosphogluconate dehydrogenase family. Forms homodimer. Forms heterodimers with PGD1 or PGD3.

Its subcellular location is the cytoplasm. It localises to the cytosol. It is found in the peroxisome. The catalysed reaction is 6-phospho-D-gluconate + NADP(+) = D-ribulose 5-phosphate + CO2 + NADPH. Its pathway is carbohydrate degradation; pentose phosphate pathway; D-ribulose 5-phosphate from D-glucose 6-phosphate (oxidative stage): step 3/3. Functionally, catalyzes the oxidative decarboxylation of 6-phosphogluconate to ribulose 5-phosphate and CO(2), with concomitant reduction of NADP to NADPH. Required for guided growth of the male gametophytes and interaction between the pollen tube and the ovule. The polypeptide is 6-phosphogluconate dehydrogenase, decarboxylating 2 (Arabidopsis thaliana (Mouse-ear cress)).